Consider the following 398-residue polypeptide: Acetate kinase 1 (398 aa).

Residue N9 coordinates Mg(2+). K16 contacts ATP. Residue R89 coordinates substrate. D146 (proton donor/acceptor) is an active-site residue. Residues 206-210 (HLGNG), 281-283 (DCR), and 329-333 (GIGEN) contribute to the ATP site. A Mg(2+)-binding site is contributed by E384.

Belongs to the acetokinase family. As to quaternary structure, homodimer. The cofactor is Mg(2+). Requires Mn(2+) as cofactor.

It is found in the cytoplasm. The enzyme catalyses acetate + ATP = acetyl phosphate + ADP. Its pathway is metabolic intermediate biosynthesis; acetyl-CoA biosynthesis; acetyl-CoA from acetate: step 1/2. Functionally, catalyzes the formation of acetyl phosphate from acetate and ATP. Can also catalyze the reverse reaction. In Aliivibrio fischeri (strain ATCC 700601 / ES114) (Vibrio fischeri), this protein is Acetate kinase 1.